We begin with the raw amino-acid sequence, 217 residues long: Uracil phosphoribosyltransferase (217 aa).

5-phospho-alpha-D-ribose 1-diphosphate-binding positions include arginine 84, arginine 109, and 137 to 145 (DPMLATGGS). Uracil is bound by residues isoleucine 202 and 207-209 (GDA). Aspartate 208 contacts 5-phospho-alpha-D-ribose 1-diphosphate.

The protein belongs to the UPRTase family. It depends on Mg(2+) as a cofactor.

The enzyme catalyses UMP + diphosphate = 5-phospho-alpha-D-ribose 1-diphosphate + uracil. It participates in pyrimidine metabolism; UMP biosynthesis via salvage pathway; UMP from uracil: step 1/1. With respect to regulation, allosterically activated by GTP. Functionally, catalyzes the conversion of uracil and 5-phospho-alpha-D-ribose 1-diphosphate (PRPP) to UMP and diphosphate. The sequence is that of Uracil phosphoribosyltransferase from Synechococcus elongatus (strain ATCC 33912 / PCC 7942 / FACHB-805) (Anacystis nidulans R2).